The following is a 289-amino-acid chain: 4-diphosphocytidyl-2-C-methyl-D-erythritol kinase (289 aa).

Residue Lys-11 is part of the active site. An ATP-binding site is contributed by 95-105 (PMGGGIGGGSS). Asp-137 is a catalytic residue.

It belongs to the GHMP kinase family. IspE subfamily.

It carries out the reaction 4-CDP-2-C-methyl-D-erythritol + ATP = 4-CDP-2-C-methyl-D-erythritol 2-phosphate + ADP + H(+). The protein operates within isoprenoid biosynthesis; isopentenyl diphosphate biosynthesis via DXP pathway; isopentenyl diphosphate from 1-deoxy-D-xylulose 5-phosphate: step 3/6. Functionally, catalyzes the phosphorylation of the position 2 hydroxy group of 4-diphosphocytidyl-2C-methyl-D-erythritol. This Aeromonas hydrophila subsp. hydrophila (strain ATCC 7966 / DSM 30187 / BCRC 13018 / CCUG 14551 / JCM 1027 / KCTC 2358 / NCIMB 9240 / NCTC 8049) protein is 4-diphosphocytidyl-2-C-methyl-D-erythritol kinase.